The sequence spans 337 residues: Heat-inducible transcription repressor HrcA (337 aa).

Belongs to the HrcA family.

Negative regulator of class I heat shock genes (grpE-dnaK-dnaJ and groELS operons). Prevents heat-shock induction of these operons. This chain is Heat-inducible transcription repressor HrcA, found in Pseudarthrobacter chlorophenolicus (strain ATCC 700700 / DSM 12829 / CIP 107037 / JCM 12360 / KCTC 9906 / NCIMB 13794 / A6) (Arthrobacter chlorophenolicus).